The sequence spans 421 residues: ATP-dependent RNA helicase RhlB (421 aa).

The Q motif motif lies at 9-37; it reads QKFSDFALHPKVVEALEKKGFHNCTPIQA. Residues 40–219 form the Helicase ATP-binding domain; sequence LPLTLAGRDV…FEQMNNAEYI (180 aa). An ATP-binding site is contributed by 53 to 60; sequence AQTGTGKT. Residues 165–168 carry the DEAD box motif; it reads DEAD. The Helicase C-terminal domain occupies 245–390; the sequence is RLLQTLIEEE…VSKYNPDALM (146 aa). The interval 392–421 is disordered; the sequence is DLPKPLRLTRPRTGNGPRRTGTPRNRRRSG. The segment covering 402 to 414 has biased composition (low complexity); the sequence is PRTGNGPRRTGTP.

This sequence belongs to the DEAD box helicase family. RhlB subfamily. In terms of assembly, component of the RNA degradosome, which is a multiprotein complex involved in RNA processing and mRNA degradation.

It is found in the cytoplasm. The enzyme catalyses ATP + H2O = ADP + phosphate + H(+). DEAD-box RNA helicase involved in RNA degradation. Has RNA-dependent ATPase activity and unwinds double-stranded RNA. In Escherichia coli O7:K1 (strain IAI39 / ExPEC), this protein is ATP-dependent RNA helicase RhlB.